The sequence spans 388 residues: Diacylglycerol O-acyltransferase 2 (388 aa).

The Cytoplasmic portion of the chain corresponds to 1–69; that stretch reads MKTLIAAYSG…NRSKVEKQLQ (69 aa). Residues 16-40 are disordered; that stretch reads RQAEADRSQRSHGGPALSREGSGRW. Residues 70-88 form a helical membrane-spanning segment; it reads VISVLQWVLSFLVLGVACS. At 89–92 the chain is on the lumenal side; that stretch reads AILM. Residues 93–112 traverse the membrane as a helical segment; the sequence is YIFCTDCWLIAVLYFTWLVF. Residues 113-388 lie on the Cytoplasmic side of the membrane; the sequence is DWNTPKKGGR…LPETEVLEVN (276 aa).

The protein belongs to the diacylglycerol acyltransferase family. As to quaternary structure, forms multimeric complexes consisting of several DGAT2 subunits. Interacts with SLC27A1 and this interaction is enhanced in the presence of ZFYVE1. As to expression, predominantly expressed in liver and white adipose tissue. Expressed at lower level in mammary gland, testis and peripheral blood leukocytes. Expressed in sebaceous glands of normal skin but decreased psoriatic skin.

Its subcellular location is the endoplasmic reticulum membrane. The protein resides in the lipid droplet. It is found in the cytoplasm. The protein localises to the perinuclear region. The catalysed reaction is an acyl-CoA + a 1,2-diacyl-sn-glycerol = a triacyl-sn-glycerol + CoA. It catalyses the reaction all-trans-retinol + an acyl-CoA = an all-trans-retinyl ester + CoA. The enzyme catalyses 2-(9Z-octadecenoyl)-glycerol + (9Z)-octadecenoyl-CoA = 1,2-di-(9Z-octadecenoyl)-sn-glycerol + CoA. It carries out the reaction 1,2-di-(9Z-octadecenoyl)-sn-glycerol + (9Z)-octadecenoyl-CoA = 1,2,3-tri-(9Z-octadecenoyl)-glycerol + CoA. The catalysed reaction is all-trans-retinol + hexadecanoyl-CoA = all-trans-retinyl hexadecanoate + CoA. It catalyses the reaction 1-O-(9Z-octadecenyl)-glycerol + (9Z)-octadecenoyl-CoA = 1-O-(9Z-octadecyl)-3-(9Z-octadecenoyl)-glycerol + CoA. The enzyme catalyses 1-(9Z-octadecenoyl)-glycerol + (9Z)-octadecenoyl-CoA = 1,2-di-(9Z-octadecenoyl)-glycerol + CoA. It carries out the reaction 1,2-di-(9Z-octadecenoyl)-sn-glycerol + hexadecanoyl-CoA = 1,2-di-(9Z)-octadecenoyl-3-hexadecanoyl-sn-glycerol + CoA. The catalysed reaction is 1,3-di-(9Z-octadecenoyl)-glycerol + (9Z)-octadecenoyl-CoA = 1,2,3-tri-(9Z-octadecenoyl)-glycerol + CoA. It catalyses the reaction 2,3-di-(9Z)-octadecenoyl-sn-glycerol + (9Z)-octadecenoyl-CoA = 1,2,3-tri-(9Z-octadecenoyl)-glycerol + CoA. The enzyme catalyses 2-(9Z-octadecenoyl)-glycerol + hexadecanoyl-CoA = 1-hexadecanoyl-2-(9Z-octadecenoyl)-sn-glycerol + CoA. It functions in the pathway glycerolipid metabolism; triacylglycerol biosynthesis. With respect to regulation, inhibited by niacin. Functionally, essential acyltransferase that catalyzes the terminal and only committed step in triacylglycerol synthesis by using diacylglycerol and fatty acyl CoA as substrates. Required for synthesis and storage of intracellular triglycerides. Probably plays a central role in cytosolic lipid accumulation. In liver, is primarily responsible for incorporating endogenously synthesized fatty acids into triglycerides. Also functions as an acyl-CoA retinol acyltransferase (ARAT). Also able to use 1-monoalkylglycerol (1-MAkG) as an acyl acceptor for the synthesis of monoalkyl-monoacylglycerol (MAMAG). In Homo sapiens (Human), this protein is Diacylglycerol O-acyltransferase 2.